Here is a 196-residue protein sequence, read N- to C-terminus: ATP-dependent Clp protease proteolytic subunit (196 aa).

Ser96 (nucleophile) is an active-site residue. Residue His121 is part of the active site.

Belongs to the peptidase S14 family. As to quaternary structure, fourteen ClpP subunits assemble into 2 heptameric rings which stack back to back to give a disk-like structure with a central cavity, resembling the structure of eukaryotic proteasomes.

It localises to the cytoplasm. It catalyses the reaction Hydrolysis of proteins to small peptides in the presence of ATP and magnesium. alpha-casein is the usual test substrate. In the absence of ATP, only oligopeptides shorter than five residues are hydrolyzed (such as succinyl-Leu-Tyr-|-NHMec, and Leu-Tyr-Leu-|-Tyr-Trp, in which cleavage of the -Tyr-|-Leu- and -Tyr-|-Trp bonds also occurs).. Cleaves peptides in various proteins in a process that requires ATP hydrolysis. Has a chymotrypsin-like activity. Plays a major role in the degradation of misfolded proteins. The chain is ATP-dependent Clp protease proteolytic subunit from Streptococcus salivarius.